Consider the following 697-residue polypeptide: Hormonally up-regulated neu tumor-associated kinase homolog (697 aa).

The region spanning 55 to 313 is the Protein kinase domain; it reads YLIGRKLGEG…IQQALANRWL (259 aa). Residues 61 to 69 and Lys-84 contribute to the ATP site; that span reads LGEGSFAKV. Residue Asp-179 is the Proton acceptor of the active site. 2 stretches are compositionally biased toward basic and acidic residues: residues 405 to 424 and 460 to 473; these read KMNK…KRGE and PVKE…ERES. Disordered stretches follow at residues 405 to 480 and 586 to 642; these read KMNK…LSPF and DNTS…NCVR. Polar residues predominate over residues 586–600; that stretch reads DNTSPIKGHSNQASF. The span at 607–626 shows a compositional bias: low complexity; it reads SPSSPESMSPTSPHSPHSPS. Positions 627 to 637 are enriched in polar residues; the sequence is CNNNISGNLGS.

This sequence belongs to the protein kinase superfamily. CAMK Ser/Thr protein kinase family. SNF1 subfamily.

It carries out the reaction L-seryl-[protein] + ATP = O-phospho-L-seryl-[protein] + ADP + H(+). The enzyme catalyses L-threonyl-[protein] + ATP = O-phospho-L-threonyl-[protein] + ADP + H(+). This chain is Hormonally up-regulated neu tumor-associated kinase homolog (hunk), found in Xenopus tropicalis (Western clawed frog).